We begin with the raw amino-acid sequence, 220 residues long: Probable pterin-4-alpha-carbinolamine dehydratase, chloroplastic (220 aa).

Residues 1–50 (MAATSSSPPCNISASSLLLRQPSRSILKVFGLLPPVSRNNRKLGRLTVTR) constitute a chloroplast transit peptide.

The protein belongs to the pterin-4-alpha-carbinolamine dehydratase family. Interacts with SDIR1. Interacts with AIRP2. Ubiquitinated by SDIR1. Ubiquitination leads to its subsequent degradation, thus controlling abscisic acid (ABA) signaling. Ubiquitinated by AIRP2. Ubiquitination leads to its subsequent degradation, thus controlling abscisic acid (ABA) signaling during drought stress.

The protein resides in the plastid. It localises to the chloroplast. Its subcellular location is the cell membrane. It is found in the nucleus. The catalysed reaction is (4aS,6R)-4a-hydroxy-L-erythro-5,6,7,8-tetrahydrobiopterin = (6R)-L-erythro-6,7-dihydrobiopterin + H2O. Involved in tetrahydrobiopterin biosynthesis. Interacts with and acts downstream of the E3 ubiquitin-protein ligase SDIR1 in abscisic acid (ABA) and salt stress signaling. Regulates the expression of the bZIP transcription factor ABI5, which mediates responses to ABA during seed germination and salt stress. The SDIR1-ATP1/SDIRIP1 complex plays an important role in ABA signaling through the ubiquitination pathway. Acts downstream of AIRP2 in regulation of ABA signaling during drought stress. This Arabidopsis thaliana (Mouse-ear cress) protein is Probable pterin-4-alpha-carbinolamine dehydratase, chloroplastic.